Consider the following 135-residue polypeptide: HTH-type transcriptional repressor RghR (135 aa).

One can recognise an HTH cro/C1-type domain in the interval 8–63 (LRALREERKLTVNQLATYSGVSAAGISRIENGKRGVPKPATIKKLAEALKIPYEGL). A DNA-binding region (H-T-H motif) is located at residues 19–38 (VNQLATYSGVSAAGISRIEN).

In terms of biological role, represses the expression of yvaM and both rapG and rapH. Binds directly to the promoter regions of yvaM, rapG and rapH. The polypeptide is HTH-type transcriptional repressor RghR (rghR) (Bacillus subtilis (strain 168)).